The chain runs to 1197 residues: DNA-directed RNA polymerase subunit beta (1197 aa).

The span at 1172–1185 shows a compositional bias: basic and acidic residues; sequence KEQEEKKAQQEAEK. Positions 1172-1197 are disordered; sequence KEQEEKKAQQEAEKAQAASAEDPSAE. The segment covering 1186–1197 has biased composition (low complexity); that stretch reads AQAASAEDPSAE.

This sequence belongs to the RNA polymerase beta chain family. In terms of assembly, the RNAP catalytic core consists of 2 alpha, 1 beta, 1 beta' and 1 omega subunit. When a sigma factor is associated with the core the holoenzyme is formed, which can initiate transcription.

It catalyses the reaction RNA(n) + a ribonucleoside 5'-triphosphate = RNA(n+1) + diphosphate. Functionally, DNA-dependent RNA polymerase catalyzes the transcription of DNA into RNA using the four ribonucleoside triphosphates as substrates. This is DNA-directed RNA polymerase subunit beta from Latilactobacillus sakei subsp. sakei (strain 23K) (Lactobacillus sakei subsp. sakei).